A 339-amino-acid polypeptide reads, in one-letter code: Serpentine receptor class delta-19 (339 aa).

7 consecutive transmembrane segments (helical) span residues 2–22, 39–59, 90–110, 130–150, 187–207, 242–262, and 270–290; these read IIFFEIWHWSWALLGCYLNLL, ATLIINFAATDFVECALDLFI, VGLSFLLHCLTHSVWSLLISF, ITIMFYIPSLVQALTYWTLFV, VYAVAHICLPFFPVYITIFVL, IIPMFLGIAVLLYFSSQSGLL, and SIFSVAILMPALSPITYLYFV.

It belongs to the nematode receptor-like protein srd family.

It localises to the membrane. The sequence is that of Serpentine receptor class delta-19 (srd-19) from Caenorhabditis elegans.